The following is a 976-amino-acid chain: R3H domain-containing protein 2 (976 aa).

Disordered regions lie at residues Ile32–Asn71 and Ile105–Thr147. A compositionally biased stretch (basic and acidic residues) spans Pro36 to Arg56. At Ser37 the chain carries Phosphoserine. The span at Thr58–Asn71 shows a compositional bias: basic residues. A compositionally biased stretch (basic and acidic residues) spans Ser109–Ser143. Residue Ser143 is modified to Phosphoserine. Positions Arg169–Thr232 constitute an R3H domain. In terms of domain architecture, SUZ spans Arg233 to Ser310. A compositionally biased stretch (basic and acidic residues) spans Leu257–Asn269. 5 disordered regions span residues Leu257–Pro376, Cys401–Asp457, Ala480–Gln560, Gly661–Val725, and Arg738–Ser780. Residues Ser306 to Asp317 are compositionally biased toward low complexity. 3 positions are modified to phosphoserine: Ser330, Ser333, and Ser349. Low complexity predominate over residues Cys401–Pro415. Polar residues-rich tracts occupy residues Pro441–Thr453 and Ala480–Leu504. Residues Ser543 to Gln560 show a composition bias toward low complexity. Pro residues predominate over residues Ser682–Met691. Low complexity predominate over residues Pro692–Asn714. The span at Pro748 to Met758 shows a compositional bias: polar residues. A compositionally biased stretch (low complexity) spans Ser759 to Ser777. 2 positions are modified to phosphoserine: Ser853 and Ser855. A phosphothreonine mark is found at Thr856 and Thr860.

Its subcellular location is the nucleus. This is R3H domain-containing protein 2 (R3HDM2) from Homo sapiens (Human).